Reading from the N-terminus, the 139-residue chain is Orientotoxin-2 (139 aa).

In terms of tissue distribution, expressed by the venom gland.

Its subcellular location is the secreted. The enzyme catalyses a 1,2-diacyl-sn-glycero-3-phosphocholine + H2O = a 1-acyl-sn-glycero-3-phosphocholine + a fatty acid + H(+). Functionally, has a highly toxic phospholipase A2 activity. This chain is Orientotoxin-2, found in Vespa orientalis (Oriental hornet).